A 77-amino-acid chain; its full sequence is Apelin (77 aa).

An N-terminal signal peptide occupies residues 1 to 22 (MNLSFCVQALLLLWLSLTAVCG). A propeptide spanning residues 23–41 (VPLMLPPDGKGLEEGNMRY) is cleaved from the precursor. The disordered stretch occupies residues 45 to 77 (PRTSRTGPGAWQGGRRKFRRQRPRLSHKGPMPF). Basic residues predominate over residues 58 to 71 (GRRKFRRQRPRLSH).

This sequence belongs to the apelin family. Several active peptides may be produced by proteolytic processing of the peptide precursor. As to expression, expressed in the lung, testis, ovary, uterus and mammary gland. Expressed in neurons in the thalamic paraventricular and hypothalamic supraoptic nuclei. The lung, testis and uterus mainly contain a large form that looks like apelin-36, whereas the mammary gland seems to contain 2 forms of apelin, a large form close to apelin-36 and a small form close to apelin-13 (at protein level). Widely expressed in the adult, with highest levels in the mammary gland of lactating animals, very high levels in the lung, intermediate levels in the spinal cord, ovary, adipose tissue, brain (neuronal cell bodies and fibers in the supraoptic and the paraventricular nuclei), heart and testis, and lowest levels in the pituitary gland, kidney, stomach, uterus and pancreas.

The protein localises to the secreted. Its subcellular location is the extracellular space. In terms of biological role, peptide hormone that functions as endogenous ligand for the G-protein-coupled apelin receptor (APLNR/APJ), that plays a role in cadiovascular homeostasis. Functions as a balanced agonist activating both G(i) protein pathway and beta-arrestin pathway of APLNR. Downstream G proteins activation, apelin can inhibit cAMP production and activate key intracellular effectors such as ERKs. On the other hand, APLNR activation induces beta-arrestin recruitment to the membrane leading to desensitization and internalization of the receptor. Apelin blunts cardiac hypertrophic induction from APLNR on response to pathological stimuli, but also induces myocardial hypertrophy under normal conditions. Apelin-36 dissociates more hardly than (pyroglu)apelin-13 from APLNR. Involved in the regulation of cardiac precursor cell movements during gastrulation and heart morphogenesis. Has an inhibitory effect on cytokine production in response to T-cell receptor/CD3 cross-linking; the oral intake of apelin in the colostrum and the milk might therefore modulate immune responses in neonates. Plays a role in early coronary blood vessels formation. Mediates myocardial contractility in an ERK1/2-dependent manner. May also have a role in the central control of body fluid homeostasis by influencing vasopressin release and drinking behavior. The polypeptide is Apelin (Rattus norvegicus (Rat)).